The chain runs to 182 residues: Large ribosomal subunit protein uL16 (182 aa).

Belongs to the universal ribosomal protein uL16 family. Part of the 50S ribosomal subunit.

The chain is Large ribosomal subunit protein uL16 from Thermococcus kodakarensis (strain ATCC BAA-918 / JCM 12380 / KOD1) (Pyrococcus kodakaraensis (strain KOD1)).